A 141-amino-acid chain; its full sequence is Large ribosomal subunit protein uL13 (141 aa).

It belongs to the universal ribosomal protein uL13 family. Part of the 50S ribosomal subunit.

Its function is as follows. This protein is one of the early assembly proteins of the 50S ribosomal subunit, although it is not seen to bind rRNA by itself. It is important during the early stages of 50S assembly. This chain is Large ribosomal subunit protein uL13, found in Helicobacter acinonychis (strain Sheeba).